Here is a 299-residue protein sequence, read N- to C-terminus: Protoheme IX farnesyltransferase 1 (299 aa).

A run of 9 helical transmembrane segments spans residues 24 to 44 (VVAL…PGVP), 46 to 66 (AAVV…AAMV), 97 to 117 (LLVA…CCNA), 118 to 138 (LTAW…TLLL), 146 to 166 (IVIG…AVNG), 170 to 190 (AFAL…FWAL), 217 to 237 (LSIV…VALG), 239 to 259 (AGAI…FLAV), and 278 to 298 (IWYL…LIPL).

It belongs to the UbiA prenyltransferase family. Protoheme IX farnesyltransferase subfamily.

The protein resides in the cell inner membrane. It catalyses the reaction heme b + (2E,6E)-farnesyl diphosphate + H2O = Fe(II)-heme o + diphosphate. The protein operates within porphyrin-containing compound metabolism; heme O biosynthesis; heme O from protoheme: step 1/1. Converts heme B (protoheme IX) to heme O by substitution of the vinyl group on carbon 2 of heme B porphyrin ring with a hydroxyethyl farnesyl side group. This Chromobacterium violaceum (strain ATCC 12472 / DSM 30191 / JCM 1249 / CCUG 213 / NBRC 12614 / NCIMB 9131 / NCTC 9757 / MK) protein is Protoheme IX farnesyltransferase 1.